The chain runs to 86 residues: Small nuclear ribonucleoprotein F (86 aa).

An N-acetylserine modification is found at Ser2. The 73-residue stretch at 6–78 (NPKPFLNGLT…VLYIRGVEEE (73 aa)) folds into the Sm domain.

It belongs to the snRNP Sm proteins family. SmF/LSm6 subfamily. As to quaternary structure, core component of the spliceosomal U1, U2, U4 and U5 small nuclear ribonucleoproteins (snRNPs), the building blocks of the spliceosome. Most spliceosomal snRNPs contain a common set of Sm proteins, SNRPB, SNRPD1, SNRPD2, SNRPD3, SNRPE, SNRPF and SNRPG that assemble in a heptameric protein ring on the Sm site of the small nuclear RNA to form the core snRNP. Component of the U1 snRNP. The U1 snRNP is composed of the U1 snRNA and the 7 core Sm proteins SNRPB, SNRPD1, SNRPD2, SNRPD3, SNRPE, SNRPF and SNRPG, and at least three U1 snRNP-specific proteins SNRNP70/U1-70K, SNRPA/U1-A and SNRPC/U1-C. Component of the U4/U6-U5 tri-snRNP complex composed of the U4, U6 and U5 snRNAs and at least PRPF3, PRPF4, PRPF6, PRPF8, PRPF31, SNRNP200, TXNL4A, SNRNP40, SNRPB, SNRPD1, SNRPD2, SNRPD3, SNRPE, SNRPF, SNRPG, DDX23, CD2BP2, PPIH, SNU13, EFTUD2, SART1 and USP39, plus LSM2, LSM3, LSM4, LSM5, LSM6, LSM7 and LSM8. Component of the U7 snRNP complex, or U7 Sm protein core complex, that is composed of the U7 snRNA and at least LSM10, LSM11, SNRPB, SNRPD3, SNRPE, SNRPF and SNRPG; the complex does not contain SNRPD1 and SNRPD2. Component of the minor spliceosome, which splices U12-type introns. Part of the SMN-Sm complex that contains SMN1, GEMIN2/SIP1, DDX20/GEMIN3, GEMIN4, GEMIN5, GEMIN6, GEMIN7, GEMIN8, STRAP/UNRIP and the Sm proteins SNRPB, SNRPD1, SNRPD2, SNRPD3, SNRPE, SNRPF and SNRPG; catalyzes core snRNPs assembly. Forms a 6S pICln-Sm complex composed of CLNS1A/pICln, SNRPD1, SNRPD2, SNRPE, SNRPF and SNRPG; ring-like structure where CLNS1A/pICln mimics additional Sm proteins and which is unable to assemble into the core snRNP. Interacts with GEMIN2 (via N-terminus); the interaction is direct. Interacts with SNRPD2; the interaction is direct. Interacts with SNRPE; the interaction is direct.

It is found in the cytoplasm. The protein localises to the cytosol. It localises to the nucleus. Functionally, plays a role in pre-mRNA splicing as a core component of the spliceosomal U1, U2, U4 and U5 small nuclear ribonucleoproteins (snRNPs), the building blocks of the spliceosome. Component of both the pre-catalytic spliceosome B complex and activated spliceosome C complexes. As a component of the minor spliceosome, involved in the splicing of U12-type introns in pre-mRNAs. As part of the U7 snRNP it is involved in histone 3'-end processing. This is Small nuclear ribonucleoprotein F (SNRPF) from Homo sapiens (Human).